The sequence spans 563 residues: DNA polymerase III subunit tau (563 aa).

ATP is bound at residue 45–52 (GPRGTGKT). Zn(2+)-binding residues include C64, C73, C76, and C79.

This sequence belongs to the DnaX/STICHEL family. As to quaternary structure, component of the DNA clamp loading complex consisting of tau(3):delta(1):delta'(1). The DNA polymerase III holoenzyme complex contains at least 10 different subunits organized into 3 functionally essential subassemblies: the Pol III core, the beta sliding clamp processivity factor and the clamp-loading complex. The Pol III core (subunits alpha, epsilon and theta) contains the polymerase and the 3'-5' exonuclease proofreading activities. The polymerase is tethered to the template via the dimeric beta sliding clamp processivity factor. The DNA clamp-loading complex assembles the beta sliding clamp onto the primed template and plays a central role in the organization and communication at the replication fork. Forms a complex with replicative DNA helicase DnaB (shown with G.stearothermophilus DnaB) tau(3):DnaB(6); a single ATP hydrolysis even is sufficient for complex formation. Colocalizes with DNA helicases PriA, RecQ and RecS.

The protein resides in the cytoplasm. The protein localises to the nucleoid. The catalysed reaction is DNA(n) + a 2'-deoxyribonucleoside 5'-triphosphate = DNA(n+1) + diphosphate. Part of the beta sliding clamp loading complex, which hydrolyzes ATP to load the beta clamp onto primed DNA to form the DNA replication pre-initiation complex. DNA polymerase III is a complex, multichain enzyme responsible for most of the replicative DNA synthesis in bacteria. In Bacillus subtilis (strain 168), this protein is DNA polymerase III subunit tau.